A 486-amino-acid polypeptide reads, in one-letter code: Virulence sensor protein PhoQ (486 aa).

Topologically, residues 1 to 16 are cytoplasmic; the sequence is MKKLLRLFFPLSLRVR. A helical transmembrane segment spans residues 17 to 37; it reads FLLATAAVVLVLSLAYGMVAL. At 38-194 the chain is on the periplasmic side; sequence IGYSVSFDKT…LKSSYMVWSW (157 aa). Residues Asp151 and Asp152 each contribute to the a divalent metal cation site. A helical membrane pass occupies residues 195–215; it reads FIYVLSANLLLVIPLLWVAAW. The region spanning 215 to 266 is the HAMP domain; it reads WWSLRPIEALAKEVRELEEHNRELLNPATTRELTSLVRNLNRLLKSERERYD. Topologically, residues 216-486 are cytoplasmic; that stretch reads WSLRPIEALA…GRQHSAPKDE (271 aa). Positions 274 to 480 constitute a Histidine kinase domain; that stretch reads DLTHSLKTPL…RMEVIFGRQH (207 aa). Position 277 is a phosphohistidine; by autocatalysis (His277). Asn385 contacts Mg(2+). Residues 385–393, 415–420, and 434–446 each bind ATP; these read NVLDNACKY, DDGPGI, and RVDT…GVGL. Residue Gln442 coordinates Mg(2+).

As to quaternary structure, homodimer.

The protein resides in the cell inner membrane. It catalyses the reaction ATP + protein L-histidine = ADP + protein N-phospho-L-histidine.. Member of the two-component regulatory system PhoP/PhoQ involved in virulence and adaptation to low Mg(2+) environments. In low periplasmic Mg(2+), PhoQ functions as a membrane-associated protein kinase that undergoes autophosphorylation and subsequently transfers the phosphate to PhoP, which results in the expression of PhoP-activated genes (PAG) and repression of PhoP-repressed genes (PRG). In high periplasmic Mg(2+), acts as a protein phosphatase that dephosphorylates phospho-PhoP, which results in the repression of PAG and may lead to expression of some PRG. Necessary for resistance to killing by polymorphonuclear leukocytes (PMNs) and cationic antimicrobial peptides (CAMP) they produce. The sequence is that of Virulence sensor protein PhoQ (phoQ) from Shigella flexneri.